A 717-amino-acid chain; its full sequence is Glutamate--cysteine ligase (717 aa).

The disordered stretch occupies residues 484–576; it reads SKTTEQRAAK…TDSDHTDTDD (93 aa). Composition is skewed to low complexity over residues 492–518 and 551–567; these read AKAQ…NGNG and GTTN…SNGT.

The protein belongs to the glutamate--cysteine ligase type 3 family.

The catalysed reaction is L-cysteine + L-glutamate + ATP = gamma-L-glutamyl-L-cysteine + ADP + phosphate + H(+). It catalyses the reaction (2S)-2-aminobutanoate + L-glutamate + ATP = gamma-L-glutamyl-(2S)-2-aminobutanoate + ADP + phosphate + H(+). The protein operates within sulfur metabolism; glutathione biosynthesis; glutathione from L-cysteine and L-glutamate: step 1/2. Functionally, catalyzes the ATP-dependent ligation of L-glutamate and L-cysteine and participates in the first and rate-limiting step in glutathione biosynthesis. The sequence is that of Glutamate--cysteine ligase from Drosophila melanogaster (Fruit fly).